Here is a 1167-residue protein sequence, read N- to C-terminus: Integrin alpha-E (1167 aa).

Residues 1–19 (MKWLFHTLLCMASLKPQGA) form the signal peptide. Over 20 to 1114 (FNLDVDWAWV…IFLKEEETRS (1095 aa)) the chain is Extracellular. FG-GAP repeat units follow at residues 27–81 (AWVT…PDEI) and 84–142 (QPVE…LQAQ). N-linked (GlcNAc...) asparagine glycosylation is present at N51. Disulfide bonds link C72–C83 and C130–C164. The tract at residues 149 to 192 (EGFLDPGAHVDSGDYCRSKGGSTGEEKKSARRRRTVEEEDEEED) is X-domain (extra domain). Residues 163–191 (YCRSKGGSTGEEKKSARRRRTVEEEDEEE) form a disordered region. The VWFA domain occupies 193-382 (GTEIAIVLDG…SKLQQHIVHM (190 aa)). N-linked (GlcNAc...) asparagine glycans are attached at residues N256, N314, N341, N364, N418, and N437. An FG-GAP 3 repeat occupies 383 to 435 (EGTVGDALQYQLAQTGFSAQILDKGQVLLGTVGAFNWSGGALLYSTQNGRGCF). FG-GAP repeat units lie at residues 438-491 (QTAK…REED), 492-552 (AFVR…DASF), 555-619 (AHTL…GLYD), and 623-683 (QQIR…FTPD). Residues D514, D516, D518, D522, D578, N580, D582, D586, D646, N648, D650, and D654 each contribute to the Ca(2+) site. C698 and C754 are disulfide-bonded. N-linked (GlcNAc...) asparagine glycosylation is found at N718 and N773. A disulfide bridge connects residues C814 and C820. 2 N-linked (GlcNAc...) asparagine glycosylation sites follow: N829 and N846. Cysteines 884 and 898 form a disulfide. 4 N-linked (GlcNAc...) asparagine glycosylation sites follow: N911, N925, N968, and N1013. Cystine bridges form between C998–C1023 and C1031–C1047. Residues N1055 and N1086 are each glycosylated (N-linked (GlcNAc...) asparagine). The helical transmembrane segment at 1115–1137 (LPLIIGSSIGGLLVLVVIIAILF) threads the bilayer. The Cytoplasmic portion of the chain corresponds to 1138 to 1167 (KCGFFKRKYQQLNLESTRRAQLKADSLLQD). The GFFKR motif signature appears at 1140–1144 (GFFKR).

This sequence belongs to the integrin alpha chain family. As to quaternary structure, heterodimer of an alpha and a beta subunit. The alpha subunit is composed of a heavy and a light chains linked by a disulfide bond. Alpha-E associates with beta-7.

It is found in the membrane. In terms of biological role, integrin alpha-E/beta-7 is a receptor for E-cadherin. It mediates adhesion of intra-epithelial T-lymphocytes to epithelial cell monolayers. Mice expressing a null mutation of the alpha-E subunit gene exhibit a marked reduction in the numbers of intraepithelial lymphocytes in the gut and in the development of gut-associated lymphoid aggregates, supporting a specific role for this integrin in mediating retention of lymphocytes in the intestinal wall. In Mus musculus (Mouse), this protein is Integrin alpha-E (Itgae).